We begin with the raw amino-acid sequence, 907 residues long: Eukaryotic translation initiation factor 4 gamma 2 (907 aa).

Methionine 1 is subject to N-acetylmethionine. The tract at residues 1–71 is disordered; it reads MESAIAEGGA…SAANNSANEK (71 aa). A Phosphoserine modification is found at serine 11. An MIF4G domain is found at 78 to 308; the sequence is FRKVRGILNK…QDTVELREHH (231 aa). Threonine 89 bears the Phosphothreonine mark. Omega-N-methylarginine is present on arginine 360. A Phosphoserine modification is found at serine 395. The residue at position 431 (lysine 431) is an N6-methyllysine. The residue at position 443 (serine 443) is a Phosphoserine. The tract at residues 498–541 is disordered; that stretch reads PPSAQPPRTQTPPLGQTPQLGLKTNPPLIQEKPAKTSKKPPPSK. The segment covering 503 to 516 has biased composition (polar residues); it reads PPRTQTPPLGQTPQ. Arginine 505 carries the post-translational modification Omega-N-methylarginine. Phosphothreonine occurs at positions 508 and 514. Positions 543–666 constitute an MI domain; it reads ELLKLTETVV…SISELAQPLE (124 aa). Residue lysine 575 forms a Glycyl lysine isopeptide (Lys-Gly) (interchain with G-Cter in SUMO2) linkage. The region spanning 720-904 is the W2 domain; sequence EGKGLSFLFP…ETAEEEESEE (185 aa). At serine 902 the chain carries Phosphoserine.

This sequence belongs to the eukaryotic initiation factor 4G family. In terms of assembly, interacts with the serine/threonine protein kinases MKNK1 and MKNK2. Binds EIF4A and EIF3. Interacts with MIF4GD. Interacts with DAZAP2. In terms of processing, phosphorylation; hyperphosphorylated during mitosis.

Functionally, appears to play a role in the switch from cap-dependent to IRES-mediated translation during mitosis, apoptosis and viral infection. Cleaved by some caspases and viral proteases. The sequence is that of Eukaryotic translation initiation factor 4 gamma 2 from Oryctolagus cuniculus (Rabbit).